The following is a 420-amino-acid chain: Protein STB1 (420 aa).

S2 carries the post-translational modification N-acetylserine. Residues 2 to 70 are interaction with SWI6; sequence SQPQMSPEKE…DEDHKTLLEA (69 aa). S7 is subject to Phosphoserine. 2 disordered regions span residues 30 to 187 and 273 to 319; these read QLKL…SDNT and DSPS…ELNG. The segment covering 43 to 55 has biased composition (basic and acidic residues); sequence RKQDSTTKKRSGE. S72 is modified (phosphoserine). T99 carries the post-translational modification Phosphothreonine. The residue at position 102 (S102) is a Phosphoserine. The span at 106-122 shows a compositional bias: basic and acidic residues; the sequence is RKAEDRSQQIKPRKEDT. A compositionally biased stretch (low complexity) spans 156-169; sequence NNNNSSNHSNNNNN. Over residues 277 to 319 the composition is skewed to polar residues; it reads LYLSNNNGSVQATLSPQQRRKPTTNTLHPPSNVPTTPSRELNG. Phosphothreonine is present on T419.

Interacts with the ANK repeats of SWI6. The interaction with SWI6 is required for function. Interacts with SIN3. Post-translationally, phosphorylated by CDC28 in a cell cycle-dependent manner, inhibiting the interaction with SWI6.

Its subcellular location is the cytoplasm. The protein localises to the nucleus. Functionally, involved in the regulation and timing of MBF-dependent transcription in late G1 of the cell cycle. In Saccharomyces cerevisiae (strain ATCC 204508 / S288c) (Baker's yeast), this protein is Protein STB1 (STB1).